A 117-amino-acid chain; its full sequence is Nuclear transition protein 2 (117 aa).

A disordered region spans residues Met1–Lys117. Low complexity predominate over residues Ser7–Ser26. The Zn(2+) site is built by His12, His14, His16, His24, Cys32, Cys34, Cys38, and Cys41. The span at Ala44–Pro53 shows a compositional bias: low complexity. 2 stretches are compositionally biased toward basic residues: residues Lys60 to His77 and Ser93 to Lys117. The Nuclear localization signal motif lies at Gly90–Val98. Position 112 is a phosphoserine (Ser112).

This sequence belongs to the nuclear transition protein 2 family.

It is found in the nucleus. The protein resides in the chromosome. Functionally, plays a key role in the replacement of histones to protamine in the elongating spermatids of mammals. In condensing spermatids, loaded onto the nucleosomes, where it promotes the recruitment and processing of protamines, which are responsible for histone eviction. The histone H2AB1-H2BC1/TH2B dimer is required for loading of TNP2 onto chromatin. In Mus musculus (Mouse), this protein is Nuclear transition protein 2.